Here is a 415-residue protein sequence, read N- to C-terminus: Multidrug resistance protein MdtA (415 aa).

The first 21 residues, Met1–Ala21, serve as a signal peptide directing secretion. Polar residues predominate over residues Asp31–Pro47. Disordered stretches follow at residues Asp31–Ala56 and Val390–Ser415. Residues Pro399 to Ser415 show a composition bias toward basic and acidic residues.

This sequence belongs to the membrane fusion protein (MFP) (TC 8.A.1) family. As to quaternary structure, part of a tripartite efflux system composed of MdtA, MdtB and MdtC.

It localises to the cell inner membrane. In terms of biological role, the MdtABC tripartite complex confers resistance against novobiocin and deoxycholate. The polypeptide is Multidrug resistance protein MdtA (Escherichia coli O6:H1 (strain CFT073 / ATCC 700928 / UPEC)).